The sequence spans 442 residues: Elongation factor 1-alpha (442 aa).

The tr-type G domain maps to 5–228; that stretch reads KTHINIVVIG…DSVTPPERPV (224 aa). The tract at residues 14-21 is G1; that stretch reads GHVDSGKS. 14-21 contributes to the GTP binding site; the sequence is GHVDSGKS. Residues 70-74 are G2; the sequence is GITID. The G3 stretch occupies residues 91–94; that stretch reads DAPG. GTP-binding positions include 91–95 and 153–156; these read DAPGH and NKMD. The interval 153 to 156 is G4; the sequence is NKMD. A G5 region spans residues 192-194; that stretch reads SGF.

It belongs to the TRAFAC class translation factor GTPase superfamily. Classic translation factor GTPase family. EF-Tu/EF-1A subfamily.

It localises to the cytoplasm. Its function is as follows. This protein promotes the GTP-dependent binding of aminoacyl-tRNA to the A-site of ribosomes during protein biosynthesis. The sequence is that of Elongation factor 1-alpha from Entamoeba histolytica (strain ATCC 30459 / HM-1:IMSS / ABRM).